Reading from the N-terminus, the 614-residue chain is Male-specific lethal 1 homolog (614 aa).

2 disordered regions span residues 1–127 (MTMR…GCSP) and 147–217 (KEPT…GASS). 2 positions are modified to phosphoserine: Ser-66 and Ser-126. Low complexity predominate over residues 158–169 (GAASPAATASDP). A compositionally biased stretch (pro residues) spans 170–184 (AGPPPLPLPGPPPLA). Residues 185-194 (PTATAGTLAA) are compositionally biased toward low complexity. At Ser-205 the chain carries Phosphoserine. A coiled-coil region spans residues 213–282 (SGASSQAACL…KDNEKERHKL (70 aa)). An interaction with MSL2 region spans residues 223 to 237 (KQILLLQLDLIEQQQ). Composition is skewed to basic and acidic residues over residues 272 to 281 (KKDNEKERHK) and 294 to 304 (TELSEKIKLEC). A disordered region spans residues 272–420 (KKDNEKERHK…PKEKAFSSEI (149 aa)). Residue Lys-301 forms a Glycyl lysine isopeptide (Lys-Gly) (interchain with G-Cter in SUMO2) linkage. A Nuclear localization signal motif is present at residues 317–346 (PKPFSCGRSGKGHKRKSPFGSTERKTPVKK). Lys-353 carries the post-translational modification N6-acetyllysine. Glycyl lysine isopeptide (Lys-Gly) (interchain with G-Cter in SUMO2) cross-links involve residues Lys-365 and Lys-378. Over residues 376 to 392 (VCKRELRSQETPEKPRS) the composition is skewed to basic and acidic residues. The residue at position 393 (Ser-393) is a Phosphoserine. Over residues 393 to 407 (SVDTPPRLSTPQKGP) the composition is skewed to polar residues. The residue at position 396 (Thr-396) is a Phosphothreonine. A Phosphoserine modification is found at Ser-442. Positions 472-591 (VLAVPSWRDH…LTPQNFELPW (120 aa)) constitute a PEHE domain. An interaction with KAT8 HAT domain region spans residues 496 to 514 (ENLDDSVFSKRHAKLELDE). Residues 505–519 (KRHAKLELDEKRRKR) carry the Bipartite nuclear localization signal motif. Positions 550 to 591 (EVTSFFPEPDDVESLMITPFLPVVAFGRPLPKLTPQNFELPW) are sufficient for interaction with MSL3 MRG domain.

This sequence belongs to the msl-1 family. As to quaternary structure, component of a multisubunit histone acetyltransferase complex (MSL) at least composed of the KAT8/MOF/MYST1, MSL1/hampin, MSL2 and MSL3. Forms a MSL heterotetrameric core with MSL2. Interacts (via PEHE domain) with KAT8 (via HAT domain) and MSL3 (via MRG domain); both interactions are direct. Directly interacts with NUPR1. Interacts with TP53BP1; this interaction may be required for MSL1 DNA repair activity, but not for histone acetyltransferase activity. Interacts with TTC4, ECM2 and PIHD1. Sumoylated with SUMO1.

The protein localises to the nucleus. It is found in the nucleoplasm. It localises to the nucleus speckle. Non-catalytic component of the MSL histone acetyltransferase complex, a multiprotein complex that mediates the majority of histone H4 acetylation at 'Lys-16' (H4K16ac), an epigenetic mark that prevents chromatin compaction. The MSL complex is required for chromosome stability and genome integrity by maintaining homeostatic levels of H4K16ac. The MSL complex is also involved in gene dosage by promoting up-regulation of genes expressed by the X chromosome. X up-regulation is required to compensate for autosomal biallelic expression. The MSL complex also participates in gene dosage compensation by promoting expression of Tsix non-coding RNA. Within the MSL complex, acts as a scaffold to tether MSL3 and KAT8 together for enzymatic activity regulation. Greatly enhances MSL2 E3 ubiquitin ligase activity, promoting monoubiquitination of histone H2B at 'Lys-34' (H2BK34Ub). This modification in turn stimulates histone H3 methylation at 'Lys-4' (H3K4me) and 'Lys-79' (H3K79me) and leads to gene activation, including that of HOXA9 and MEIS1. This is Male-specific lethal 1 homolog from Homo sapiens (Human).